Reading from the N-terminus, the 128-residue chain is MIVGLGTDLVEIARMERLLARHGDRALTRLLHVQERAECPRAPDRAARFLARRFAAKEAAAKALGTGIANGIRFADLQVSHDDRGRPLLNLHGEARQHAQALGATGHHLSISDEQTHALAFVVLESSD.

The Mg(2+) site is built by Asp-8 and Glu-58.

It belongs to the P-Pant transferase superfamily. AcpS family. The cofactor is Mg(2+).

The protein resides in the cytoplasm. It catalyses the reaction apo-[ACP] + CoA = holo-[ACP] + adenosine 3',5'-bisphosphate + H(+). Its function is as follows. Transfers the 4'-phosphopantetheine moiety from coenzyme A to a Ser of acyl-carrier-protein. The protein is Holo-[acyl-carrier-protein] synthase of Alkalilimnicola ehrlichii (strain ATCC BAA-1101 / DSM 17681 / MLHE-1).